The chain runs to 96 residues: Elicitor peptide 3 (96 aa).

The propeptide occupies 1–73; sequence MENLRNGEDN…EEEEEDGMTI (73 aa). The disordered stretch occupies residues 32 to 96; the sequence is SGLESSSSSS…PSSGKGGKHN (65 aa). The segment covering 35 to 49 has biased composition (low complexity); sequence ESSSSSSSSCDLSSS. Residues 52-71 are compositionally biased toward acidic residues; it reads EEDESIDIKEEEEEEEEDGM.

Belongs to the brassicaceae elicitor peptide family.

Functionally, elicitor of plant defense. This chain is Elicitor peptide 3 (PEP3), found in Arabidopsis thaliana (Mouse-ear cress).